A 211-amino-acid polypeptide reads, in one-letter code: MDLTDTQQAILQLIAERIESEGAPPSQTEIARAFGFKGVRAAQYHLEALEQAGAIRRIPGQARGIRLVQAPPLEKLAEPGLPDNVLRLPVLGRVAAGLPIGADIGSDDFVVLDRVFFSPAPDYLLKVQGDSMIDEGIFDGDLIGVHRTRDAHSGQIVVARIDDEITVKLLKIAKDRIRLLPRNPDYKPIEVLPDQDFSIEGLYCGLLRPNR.

Positions 27 to 47 form a DNA-binding region, H-T-H motif; the sequence is QTEIARAFGFKGVRAAQYHLE. Residues Ser131 and Lys168 each act as for autocatalytic cleavage activity in the active site.

It belongs to the peptidase S24 family. As to quaternary structure, homodimer.

It catalyses the reaction Hydrolysis of Ala-|-Gly bond in repressor LexA.. In terms of biological role, represses a number of genes involved in the response to DNA damage (SOS response), including recA and lexA. In the presence of single-stranded DNA, RecA interacts with LexA causing an autocatalytic cleavage which disrupts the DNA-binding part of LexA, leading to derepression of the SOS regulon and eventually DNA repair. This is LexA repressor from Stenotrophomonas maltophilia (strain R551-3).